The chain runs to 183 residues: Ribosome-recycling factor (183 aa).

The protein belongs to the RRF family.

The protein localises to the cytoplasm. Functionally, responsible for the release of ribosomes from messenger RNA at the termination of protein biosynthesis. May increase the efficiency of translation by recycling ribosomes from one round of translation to another. The chain is Ribosome-recycling factor from Buchnera aphidicola subsp. Baizongia pistaciae (strain Bp).